A 101-amino-acid chain; its full sequence is Large ribosomal subunit protein bL25 (101 aa).

The protein belongs to the bacterial ribosomal protein bL25 family. As to quaternary structure, part of the 50S ribosomal subunit; part of the 5S rRNA/L5/L18/L25 subcomplex. Contacts the 5S rRNA. Binds to the 5S rRNA independently of L5 and L18.

In terms of biological role, this is one of the proteins that binds to the 5S RNA in the ribosome where it forms part of the central protuberance. In Thermosynechococcus vestitus (strain NIES-2133 / IAM M-273 / BP-1), this protein is Large ribosomal subunit protein bL25.